Here is a 120-residue protein sequence, read N- to C-terminus: NAD(P)H-quinone oxidoreductase subunit 3, chloroplastic (120 aa).

The next 3 helical transmembrane spans lie at Phe10 to Leu30, Met64 to Met84, and Leu89 to Val109.

This sequence belongs to the complex I subunit 3 family. NDH is composed of at least 16 different subunits, 5 of which are encoded in the nucleus.

The protein resides in the plastid. It localises to the chloroplast thylakoid membrane. The enzyme catalyses a plastoquinone + NADH + (n+1) H(+)(in) = a plastoquinol + NAD(+) + n H(+)(out). It catalyses the reaction a plastoquinone + NADPH + (n+1) H(+)(in) = a plastoquinol + NADP(+) + n H(+)(out). Functionally, NDH shuttles electrons from NAD(P)H:plastoquinone, via FMN and iron-sulfur (Fe-S) centers, to quinones in the photosynthetic chain and possibly in a chloroplast respiratory chain. The immediate electron acceptor for the enzyme in this species is believed to be plastoquinone. Couples the redox reaction to proton translocation, and thus conserves the redox energy in a proton gradient. This chain is NAD(P)H-quinone oxidoreductase subunit 3, chloroplastic, found in Zygnema circumcarinatum (Green alga).